We begin with the raw amino-acid sequence, 165 residues long: MSQATKRKHVVKEVLGEHIVPSDQQQIVRVLRTPGNNLHEVETAQGQRFLVSMPSKYRKNIWIKRGDFLIVDPIEEGEKVKAEISFVLCKDHVRSLQKEGFWPEAFSEVAEKHNNRNRQTQPELPAEPQLSGEESSSEDDSDLFVNTNRRQYHESEEESEEEEAA.

The 85-residue stretch at 5–89 (TKRKHVVKEV…VKAEISFVLC (85 aa)) folds into the S1-like domain. Residues 6-12 (KRKHVVK) carry the Nuclear localization signal motif. T33 carries the phosphothreonine modification. The Nuclear localization signal motif lies at 56 to 65 (KYRKNIWIKR). A disordered region spans residues 112 to 165 (KHNNRNRQTQPELPAEPQLSGEESSSEDDSDLFVNTNRRQYHESEEESEEEEAA). Residues S131, S135, S136, S137, S155, and S159 each carry the phosphoserine modification. A compositionally biased stretch (acidic residues) spans 155–165 (SEEESEEEEAA).

It belongs to the EIF1AD family. As to quaternary structure, interacts with GAPDH and STAT1.

Its subcellular location is the nucleus. In terms of biological role, plays a role into cellular response to oxidative stress. Decreases cell proliferation. The sequence is that of Probable RNA-binding protein EIF1AD (EIF1AD) from Macaca fascicularis (Crab-eating macaque).